The chain runs to 303 residues: UDP-N-acetylenolpyruvoylglucosamine reductase (303 aa).

The FAD-binding PCMH-type domain maps to 28 to 195; the sequence is KTGGPAQYLA…ISATFGLEPG (168 aa). R174 is an active-site residue. Residue S224 is the Proton donor of the active site. The active site involves E294.

The protein belongs to the MurB family. FAD serves as cofactor.

The protein localises to the cytoplasm. The catalysed reaction is UDP-N-acetyl-alpha-D-muramate + NADP(+) = UDP-N-acetyl-3-O-(1-carboxyvinyl)-alpha-D-glucosamine + NADPH + H(+). Its pathway is cell wall biogenesis; peptidoglycan biosynthesis. In terms of biological role, cell wall formation. The polypeptide is UDP-N-acetylenolpyruvoylglucosamine reductase (Lactobacillus gasseri (strain ATCC 33323 / DSM 20243 / BCRC 14619 / CIP 102991 / JCM 1131 / KCTC 3163 / NCIMB 11718 / NCTC 13722 / AM63)).